The following is a 521-amino-acid chain: Beta-glucosidase 6 (521 aa).

Residues M1–A38 form the signal peptide. Residues Q64, H165, and N210 to E211 contribute to the a beta-D-glucoside site. E211 (proton donor) is an active-site residue. A disulfide bond links C230 and C238. A glycan (N-linked (GlcNAc...) asparagine) is linked at N291. Y354 lines the a beta-D-glucoside pocket. N-linked (GlcNAc...) asparagine glycans are attached at residues N362 and N372. Residues E427, W477, E484 to W485, and F493 contribute to the a beta-D-glucoside site. The Nucleophile role is filled by E427.

The protein belongs to the glycosyl hydrolase 1 family. In terms of assembly, homodimer.

It is found in the secreted. The catalysed reaction is Hydrolysis of terminal, non-reducing beta-D-glucosyl residues with release of beta-D-glucose.. In terms of biological role, hydrolyzes glycosides, oligosaccharides and hydrophobic glycosides. Possesses gibberellin ester beta-D-glucosidase activity. Can hydrolyze gibberellin A4 beta-D-glucosyl ester in vitro. The sequence is that of Beta-glucosidase 6 from Oryza sativa subsp. japonica (Rice).